The primary structure comprises 235 residues: Repeat element protein (235 aa).

Positions 57-235 are repeat element; it reads IFQELLERLS…ARRKKCRFSQ (179 aa).

The chain is Repeat element protein from Campoletis sonorensis (CsIV).